We begin with the raw amino-acid sequence, 464 residues long: GDNF family receptor alpha-2 (464 aa).

The first 21 residues, 1-21, serve as a signal peptide directing secretion; that stretch reads MILANAFCLFFFLDETLRSLA. 14 disulfides stabilise this stretch: cysteine 40/cysteine 93, cysteine 47/cysteine 53, cysteine 63/cysteine 78, cysteine 95/cysteine 105, cysteine 161/cysteine 222, cysteine 168/cysteine 174, cysteine 185/cysteine 200, cysteine 195/cysteine 241, cysteine 224/cysteine 229, cysteine 251/cysteine 323, cysteine 258/cysteine 264, cysteine 275/cysteine 293, cysteine 285/cysteine 347, and cysteine 325/cysteine 335. Residue asparagine 52 is glycosylated (N-linked (GlcNAc...) asparagine). Residue asparagine 357 is glycosylated (N-linked (GlcNAc...) asparagine). The segment covering 360–374 has biased composition (polar residues); that stretch reads DVNLSPKSPPFQATQ. A disordered region spans residues 360 to 392; sequence DVNLSPKSPPFQATQAPRVDKTPSLPDDLSDST. A compositionally biased stretch (low complexity) spans 381–392; that stretch reads TPSLPDDLSDST. N-linked (GlcNAc...) asparagine glycosylation occurs at asparagine 413. Asparagine 440 is lipidated: GPI-anchor amidated asparagine. Positions 441–464 are cleaved as a propeptide — removed in mature form; that stretch reads SGPRRTRPSAALTAASFLMLKLAL.

Belongs to the GDNFR family. As to quaternary structure, interacts with NRTN ligand and RET: forms a 2:2:2 ternary complex composed of NRTN ligand, GFRA2 and RET receptor. Also forms a 4:4:4 tetrameric complex composed of 4 copies of NRTN ligand, GFRA2 and RET receptor, which prevents endocytosis of RET. Interacts with SORL1.

The protein resides in the cell membrane. In terms of biological role, receptor for neurturin (NRTN), a growth factor that supports the survival of sympathetic neurons. NRTN-binding leads to autophosphorylation and activation of the RET receptor. Also able to mediate GDNF signaling through the RET tyrosine kinase receptor. This Bos taurus (Bovine) protein is GDNF family receptor alpha-2 (GFRA2).